The following is a 28-amino-acid chain: Metallothionein-like protein type 2 LSC210 (28 aa).

The protein belongs to the metallothionein superfamily. Type 15 family.

Metallothioneins have a high content of cysteine residues that bind various heavy metals. The sequence is that of Metallothionein-like protein type 2 LSC210 (LSC210) from Brassica napus (Rape).